The sequence spans 574 residues: Glycine--tRNA ligase (574 aa).

The substrate site is built by arginine 96 and glutamate 162. Residues 194–196 (RNE), 204–209 (IRLREF), 327–328 (EC), and 450–453 (GIDR) each bind ATP. Residue 209–213 (FTQAE) coordinates substrate. 446 to 450 (EPSYG) serves as a coordination point for substrate.

This sequence belongs to the class-II aminoacyl-tRNA synthetase family.

The protein resides in the cytoplasm. The catalysed reaction is tRNA(Gly) + glycine + ATP = glycyl-tRNA(Gly) + AMP + diphosphate. Catalyzes the attachment of glycine to tRNA(Gly). The chain is Glycine--tRNA ligase from Methanococcus vannielii (strain ATCC 35089 / DSM 1224 / JCM 13029 / OCM 148 / SB).